The chain runs to 293 residues: ATP synthase subunit a (293 aa).

6 helical membrane passes run 40 to 60 (DSLFWSGLMGLIVIFCLWLAA), 98 to 118 (FVAPLALTVFLWIILMNALDL), 151 to 171 (DLNVPMGMSLGVLLLMFYYGI), 188 to 208 (FHAHGLAALVLAPFNLLLNLI), 225 to 245 (MFAGELIFMLIALLGGAWTGF), and 264 to 284 (AIFHILIVLLQAFIFMMLTLV).

The protein belongs to the ATPase A chain family. F-type ATPases have 2 components, CF(1) - the catalytic core - and CF(0) - the membrane proton channel. CF(1) has five subunits: alpha(3), beta(3), gamma(1), delta(1), epsilon(1). CF(0) has three main subunits: a(1), b(2) and c(9-12). The alpha and beta chains form an alternating ring which encloses part of the gamma chain. CF(1) is attached to CF(0) by a central stalk formed by the gamma and epsilon chains, while a peripheral stalk is formed by the delta and b chains.

The protein resides in the cell inner membrane. In terms of biological role, key component of the proton channel; it plays a direct role in the translocation of protons across the membrane. The chain is ATP synthase subunit a from Bordetella avium (strain 197N).